Consider the following 169-residue polypeptide: Shikimate kinase (169 aa).

12 to 17 (GAGKST) contacts ATP. Position 16 (serine 16) interacts with Mg(2+). Substrate-binding residues include aspartate 34, arginine 58, and glycine 80. Arginine 117 is an ATP binding site. Residue arginine 136 participates in substrate binding.

Belongs to the shikimate kinase family. As to quaternary structure, monomer. It depends on Mg(2+) as a cofactor.

It is found in the cytoplasm. It catalyses the reaction shikimate + ATP = 3-phosphoshikimate + ADP + H(+). It participates in metabolic intermediate biosynthesis; chorismate biosynthesis; chorismate from D-erythrose 4-phosphate and phosphoenolpyruvate: step 5/7. Its function is as follows. Catalyzes the specific phosphorylation of the 3-hydroxyl group of shikimic acid using ATP as a cosubstrate. The sequence is that of Shikimate kinase from Rhodococcus erythropolis (strain PR4 / NBRC 100887).